We begin with the raw amino-acid sequence, 1529 residues long: DNA (cytosine-5)-methyltransferase 1B (1529 aa).

2 disordered regions span residues 1-56 and 674-706; these read MVKS…RAAC and DDEL…TRSR. The segment covering 21–35 has biased composition (basic and acidic residues); the sequence is QKKDEDTTDKGKLDE. The span at 674 to 694 shows a compositional bias: acidic residues; that stretch reads DDELEENEDEDAEEEAQIEEE. The segment covering 697-706 has biased composition (polar residues); the sequence is SKTPPSTRSR. BAH domains lie at 741–873 and 910–1049; these read LRIN…FSLP and ITYN…KQLP. One can recognise an SAM-dependent MTase C5-type domain in the interval 1093–1527; the sequence is LATLDIFAGC…RKLKEAVDAK (435 aa). Cys1198 is an active-site residue.

Belongs to the class I-like SAM-binding methyltransferase superfamily. C5-methyltransferase family. In terms of tissue distribution, expressed in roots and inflorescences. Expressed in roots, panicles, anthers, pistils, endosperm and imbibed embryos. Expressed in tissues containing actively replicating and dividing cells, such as shoot and root meristems.

The protein localises to the nucleus. The catalysed reaction is a 2'-deoxycytidine in DNA + S-adenosyl-L-methionine = a 5-methyl-2'-deoxycytidine in DNA + S-adenosyl-L-homocysteine + H(+). Major CG methylase that methylates chromatin CpG residues and maintains DNA methylation. Plays a major role in genomic imprinting, regulation of embryogenesis and seed viability. Maintains DNA methylation at the FIE1 gene locus in the embryo. The sequence is that of DNA (cytosine-5)-methyltransferase 1B (MET1B) from Oryza sativa subsp. japonica (Rice).